The following is a 489-amino-acid chain: UDP-N-acetylmuramate--L-alanine ligase (489 aa).

Residue 128 to 134 (GTHGKTT) participates in ATP binding.

It belongs to the MurCDEF family.

The protein resides in the cytoplasm. The catalysed reaction is UDP-N-acetyl-alpha-D-muramate + L-alanine + ATP = UDP-N-acetyl-alpha-D-muramoyl-L-alanine + ADP + phosphate + H(+). It functions in the pathway cell wall biogenesis; peptidoglycan biosynthesis. In terms of biological role, cell wall formation. This chain is UDP-N-acetylmuramate--L-alanine ligase, found in Shewanella pealeana (strain ATCC 700345 / ANG-SQ1).